Reading from the N-terminus, the 396-residue chain is tRNA (guanine(9)-N1)-methyltransferase (396 aa).

Basic and acidic residues-rich tracts occupy residues M1–V18 and D52–D73. The tract at residues M1–A109 is disordered. One can recognise an SAM-dependent MTase TRM10-type domain in the interval T139 to K357. S-adenosyl-L-methionine contacts are provided by residues L264 to S265, G284, D288 to H292, C296, L310, and Q322 to L324. D288 (proton acceptor) is an active-site residue. The segment at K354 to E396 is disordered. Over residues K359–V374 the composition is skewed to basic and acidic residues.

Belongs to the class IV-like SAM-binding methyltransferase superfamily. TRM10 family. Monomer.

The protein localises to the cytoplasm. It is found in the nucleus. It carries out the reaction guanosine(9) in tRNA + S-adenosyl-L-methionine = N(1)-methylguanosine(9) in tRNA + S-adenosyl-L-homocysteine + H(+). Its function is as follows. S-adenosyl-L-methionine-dependent guanine N(1)-methyltransferase that catalyzes the formation of N(1)-methylguanine at position 9 (m1G9) in cytoplasmic tRNA. This is tRNA (guanine(9)-N1)-methyltransferase from Aspergillus fumigatus (strain ATCC MYA-4609 / CBS 101355 / FGSC A1100 / Af293) (Neosartorya fumigata).